A 328-amino-acid chain; its full sequence is Aspartate carbamoyltransferase catalytic subunit (328 aa).

R64 and T65 together coordinate carbamoyl phosphate. K92 contributes to the L-aspartate binding site. R114, H144, and Q147 together coordinate carbamoyl phosphate. L-aspartate is bound by residues R177 and R232. Carbamoyl phosphate is bound by residues G273 and P274.

Belongs to the aspartate/ornithine carbamoyltransferase superfamily. ATCase family. In terms of assembly, heterododecamer (2C3:3R2) of six catalytic PyrB chains organized as two trimers (C3), and six regulatory PyrI chains organized as three dimers (R2).

The enzyme catalyses carbamoyl phosphate + L-aspartate = N-carbamoyl-L-aspartate + phosphate + H(+). It participates in pyrimidine metabolism; UMP biosynthesis via de novo pathway; (S)-dihydroorotate from bicarbonate: step 2/3. Its function is as follows. Catalyzes the condensation of carbamoyl phosphate and aspartate to form carbamoyl aspartate and inorganic phosphate, the committed step in the de novo pyrimidine nucleotide biosynthesis pathway. This Halorhodospira halophila (strain DSM 244 / SL1) (Ectothiorhodospira halophila (strain DSM 244 / SL1)) protein is Aspartate carbamoyltransferase catalytic subunit.